The sequence spans 183 residues: Ribulose bisphosphate carboxylase small subunit, chloroplastic (183 aa).

A chloroplast-targeting transit peptide spans 1 to 59 (MASSMISSGTVATVSADRPAPAQARMVAPFNGLKSSSAFPVTRKSNDITSIASNGGRVQ).

It belongs to the RuBisCO small chain family. Heterohexadecamer of 8 large and 8 small subunits.

It localises to the plastid. It is found in the chloroplast. Functionally, ruBisCO catalyzes two reactions: the carboxylation of D-ribulose 1,5-bisphosphate, the primary event in carbon dioxide fixation, as well as the oxidative fragmentation of the pentose substrate. Both reactions occur simultaneously and in competition at the same active site. Although the small subunit is not catalytic it is essential for maximal activity. The sequence is that of Ribulose bisphosphate carboxylase small subunit, chloroplastic from Pyrus pyrifolia (Chinese pear).